We begin with the raw amino-acid sequence, 410 residues long: F-box protein At3g61340 (410 aa).

In terms of domain architecture, F-box spans 17–66 (EEKSERIPFDLVIEILLRLPVKSIARFRYVSKLWQSTLRGQHFTESYLTI).

In Arabidopsis thaliana (Mouse-ear cress), this protein is F-box protein At3g61340.